A 727-amino-acid polypeptide reads, in one-letter code: 1,4-alpha-glucan branching enzyme GlgB (727 aa).

Asp-405 acts as the Nucleophile in catalysis. The Proton donor role is filled by Glu-458.

It belongs to the glycosyl hydrolase 13 family. GlgB subfamily. As to quaternary structure, monomer.

The catalysed reaction is Transfers a segment of a (1-&gt;4)-alpha-D-glucan chain to a primary hydroxy group in a similar glucan chain.. The protein operates within glycan biosynthesis; glycogen biosynthesis. Its function is as follows. Catalyzes the formation of the alpha-1,6-glucosidic linkages in glycogen by scission of a 1,4-alpha-linked oligosaccharide from growing alpha-1,4-glucan chains and the subsequent attachment of the oligosaccharide to the alpha-1,6 position. In Yersinia pseudotuberculosis serotype O:1b (strain IP 31758), this protein is 1,4-alpha-glucan branching enzyme GlgB.